The chain runs to 204 residues: Large ribosomal subunit protein uL4 (204 aa).

A disordered region spans residues 44-76 (KRQGTQSAKTRSEVRGGGIKPWRQKGTGRARQG).

The protein belongs to the universal ribosomal protein uL4 family. In terms of assembly, part of the 50S ribosomal subunit.

Functionally, one of the primary rRNA binding proteins, this protein initially binds near the 5'-end of the 23S rRNA. It is important during the early stages of 50S assembly. It makes multiple contacts with different domains of the 23S rRNA in the assembled 50S subunit and ribosome. Its function is as follows. Forms part of the polypeptide exit tunnel. The sequence is that of Large ribosomal subunit protein uL4 from Clostridium perfringens (strain 13 / Type A).